We begin with the raw amino-acid sequence, 1099 residues long: Protein DDB_G0287365 (1099 aa).

Residues 1–24 (MMSFNLILILIIFLILIQNYVIDG) form the signal peptide. In terms of domain architecture, G8 spans 47-174 (KSWKKLKLPI…TKTTWTKLIS (128 aa)). N-linked (GlcNAc...) asparagine glycosylation is found at N62, N137, N664, N764, and N858.

This sequence belongs to the CEMIP family.

This chain is Protein DDB_G0287365, found in Dictyostelium discoideum (Social amoeba).